A 153-amino-acid polypeptide reads, in one-letter code: Proline-rich membrane anchor 1 (153 aa).

The signal sequence occupies residues 1–35 (MLLRDLVPRHGCCWPSLLLHCALHPLWGLVQVTHA). At 36 to 92 (EPQKSCSKVTDSCQHICQCRPPPPLPPPPPPPPPPRLLSAPAPNSTSCPAEDSWWSG) the chain is on the extracellular side. Residues 56-70 (PPPPLPPPPPPPPPP) form the PRAD domain. Over residues 59–71 (PLPPPPPPPPPPR) the composition is skewed to pro residues. The interval 59-79 (PLPPPPPPPPPPRLLSAPAPN) is disordered. An N-linked (GlcNAc...) asparagine glycan is attached at asparagine 79. The helical transmembrane segment at 93–113 (LVIIVAVVCASLVFLTVLVII) threads the bilayer. Over 114-153 (CYKAIKRKPLRKDENGTSVAEYPMSSSQSHKGVDVNAAVV) the chain is Cytoplasmic. The interval 129-153 (GTSVAEYPMSSSQSHKGVDVNAAVV) is disordered.

Interacts with ACHE, probably through disulfide bonds. Predominantly expressed in the central nervous system, including in the brain. Also expressed in muscle, heart and kidney. Isoform 1 may be predominant in the cortex and striatum, while isoform 2 is more abundant in the cerebellum.

The protein resides in the cell membrane. Its subcellular location is the cell junction. It is found in the synapse. Functionally, required to anchor acetylcholinesterase (ACHE) to the basal lamina of the neuromuscular junction and to the membrane of neuronal synapses in brain. Also able to organize ACHE into tetramers. The sequence is that of Proline-rich membrane anchor 1 (Prima1) from Mus musculus (Mouse).